A 462-amino-acid polypeptide reads, in one-letter code: MGKEKTHINIVVIGHVDSGKSTTTGHLIYKCGGIDKRTIEKFEKEAAEMGKGSFKYAWVLDKLKAERERGITIDISLWKFETSKYYVTIIDAPGHRDFIKNMITGTSQADCAVLIVAAGVGEFEAGISKNGQTREHALLAYTLGVKQLIVGVNKMDSTEPPYSQKRYEEIVKEVSTYIKKIGYNPDTVAFVPISGWNGDNMLEPSANMPWFKGWKVTRKDGSASGTTLLEALDCILPPTRPTDKPLRLPLQDVYKIGGIGTVPVGRVETGVLKPGMVVTFAPVNVTTEVKSVEMHHEALSEALPGDNVGFNVKNVSVKDVRRGNVAGDSKNDPPMEAAGFTAQVIILNHPGQISAGYAPVLDCHTAHIACKFAELKEKIDRRSGKKLEDGPKFLKSGDAAIVDMVPGKPMCVESFSDYPPLGRFAVRDMRQTVAVGVIKAVDKKAAGAGKVTKSAQKAQKAK.

Gly-2 is subject to N,N,N-trimethylglycine. The region spanning 5–242 (KTHINIVVIG…DCILPPTRPT (238 aa)) is the tr-type G domain. Positions 14–21 (GHVDSGKS) are G1. Position 14–21 (14–21 (GHVDSGKS)) interacts with GTP. Lys-36 carries the N6,N6,N6-trimethyllysine; alternate modification. Lys-36 bears the N6,N6-dimethyllysine; alternate mark. At Lys-36 the chain carries N6-methyllysine; alternate. At Lys-55 the chain carries N6,N6-dimethyllysine. Residues 70 to 74 (GITID) form a G2 region. Position 79 is an N6,N6,N6-trimethyllysine; by EEF1AKMT1 (Lys-79). Positions 91–94 (DAPG) are G3. GTP is bound at residue 153-156 (NKMD). The interval 153-156 (NKMD) is G4. An N6,N6,N6-trimethyllysine; alternate; by EEF1AKMT3 modification is found at Lys-165. Residue Lys-165 is modified to N6,N6-dimethyllysine; alternate; by EEF1AKMT3. At Lys-165 the chain carries N6-acetyllysine; alternate. The residue at position 165 (Lys-165) is an N6-methyllysine; alternate; by EEF1AKMT3. Residue Lys-172 is modified to N6-acetyllysine. Position 194–196 (194–196 (SGW)) interacts with GTP. The G5 stretch occupies residues 194-196 (SGW). N6-acetyllysine is present on Lys-273. Ser-300 carries the post-translational modification Phosphoserine; by TGFBR1. Residue Glu-301 is modified to 5-glutamyl glycerylphosphorylethanolamine. An N6,N6,N6-trimethyllysine; by EEF1AKMT2 modification is found at Lys-318. Glu-374 carries the post-translational modification 5-glutamyl glycerylphosphorylethanolamine. A Glycyl lysine isopeptide (Lys-Gly) (interchain with G-Cter in ubiquitin) cross-link involves residue Lys-385. At Lys-392 the chain carries N6-acetyllysine; alternate. Residue Lys-392 is modified to N6-succinyllysine; alternate. Thr-432 carries the post-translational modification Phosphothreonine; by PASK. The residue at position 439 (Lys-439) is an N6-acetyllysine.

This sequence belongs to the TRAFAC class translation factor GTPase superfamily. Classic translation factor GTPase family. EF-Tu/EF-1A subfamily. In terms of assembly, found in a nuclear export complex with XPO5, EEF1A1, Ran and aminoacylated tRNA. Interacts with PARP1 and TXK. Interacts with KARS1. May interact with ERGIC2. Interacts with IFIT1 (via TPR repeats 4-7). Interacts with DLC1, facilitating distribution to the membrane periphery and ruffles upon growth factor stimulation. Interacts with ZPR1; the interaction occurs in a epidermal growth factor (EGF)-dependent manner. Interacts with PPP1R16B. Interacts with SPHK1 and SPHK2; both interactions increase SPHK1 and SPHK2 kinase activity. Interacts with guanyl-nucleotide exchange factor EEF1B2. Interacts (via middle-region) with HTATIP2 (via N-terminus); the interaction is direct and competes with EEF1A1 binding to guanyl-nucleotide exchange factor EEF1B2, thereby inhibiting GDP for GTP exchange and reactivation of EEF1A1. Interacts with tRNA. In terms of processing, ISGylated. Post-translationally, phosphorylated by TXK. Phosphorylation by PASK increases translation efficiency. Phosphorylated by ROCK2. Phosphorylation by TGFBR1 inhibits translation elongation. Trimethylated at Lys-79 by EEF1AKMT1. Methylated at Lys-165 by EEF1AKMT3, methylation by EEF1AKMT3 is dynamic as well as inducible by stress conditions, such as ER-stress, and plays a regulatory role on mRNA translation. Trimethylated at Lys-318 by EEF1AKMT2. Mono-, di-, and trimethylated at Lys-36 by EEF1AKMT4; trimethylated form is predominant. Methylation by EEF1AKMT4 contributes to the fine-tuning of translation rates for a subset of tRNAs. Trimethylated at Gly-2 by METTL13. Mono- and dimethylated at Lys-55 by METTL13; dimethylated form is predominant. In terms of processing, ubiquitinated at Lys-385 by RNF14 in response to ribosome collisions (ribosome stalling), leading to its degradation by the proteasome and rescue of stalled ribosomes.

It is found in the cytoplasm. It localises to the nucleus. Its subcellular location is the nucleolus. The protein resides in the cell membrane. The enzyme catalyses GTP + H2O = GDP + phosphate + H(+). Functionally, translation elongation factor that catalyzes the GTP-dependent binding of aminoacyl-tRNA (aa-tRNA) to the A-site of ribosomes during the elongation phase of protein synthesis. Base pairing between the mRNA codon and the aa-tRNA anticodon promotes GTP hydrolysis, releasing the aa-tRNA from EEF1A1 and allowing its accommodation into the ribosome. The growing protein chain is subsequently transferred from the P-site peptidyl tRNA to the A-site aa-tRNA, extending it by one amino acid through ribosome-catalyzed peptide bond formation. Also plays a role in the positive regulation of IFNG transcription in T-helper 1 cells as part of an IFNG promoter-binding complex with TXK and PARP1. Also plays a role in cytoskeleton organization by promoting actin bundling. The chain is Elongation factor 1-alpha 1 (EEF1A1) from Cricetulus griseus (Chinese hamster).